A 269-amino-acid polypeptide reads, in one-letter code: 5'-nucleotidase SurE (269 aa).

Positions 11, 12, 43, and 101 each coordinate a divalent metal cation.

This sequence belongs to the SurE nucleotidase family. A divalent metal cation is required as a cofactor.

Its subcellular location is the cytoplasm. It carries out the reaction a ribonucleoside 5'-phosphate + H2O = a ribonucleoside + phosphate. In terms of biological role, nucleotidase that shows phosphatase activity on nucleoside 5'-monophosphates. In Synechococcus sp. (strain WH7803), this protein is 5'-nucleotidase SurE.